Consider the following 147-residue polypeptide: Ribosome-binding factor A (147 aa).

The tract at residues alanine 127–glutamate 147 is disordered.

This sequence belongs to the RbfA family. As to quaternary structure, monomer. Binds 30S ribosomal subunits, but not 50S ribosomal subunits or 70S ribosomes.

Its subcellular location is the cytoplasm. One of several proteins that assist in the late maturation steps of the functional core of the 30S ribosomal subunit. Associates with free 30S ribosomal subunits (but not with 30S subunits that are part of 70S ribosomes or polysomes). Required for efficient processing of 16S rRNA. May interact with the 5'-terminal helix region of 16S rRNA. The polypeptide is Ribosome-binding factor A (Nocardia farcinica (strain IFM 10152)).